We begin with the raw amino-acid sequence, 342 residues long: D-erythrose-4-phosphate dehydrogenase (342 aa).

11–12 (RV) contributes to the NAD(+) binding site. Substrate is bound by residues 153–155 (SCT), Arg-199, 212–213 (TK), and Arg-235. Catalysis depends on Cys-154, which acts as the Nucleophile. Asn-317 serves as a coordination point for NAD(+).

Belongs to the glyceraldehyde-3-phosphate dehydrogenase family. Epd subfamily. Homotetramer.

The protein localises to the cytoplasm. The enzyme catalyses D-erythrose 4-phosphate + NAD(+) + H2O = 4-phospho-D-erythronate + NADH + 2 H(+). The protein operates within cofactor biosynthesis; pyridoxine 5'-phosphate biosynthesis; pyridoxine 5'-phosphate from D-erythrose 4-phosphate: step 1/5. Its function is as follows. Catalyzes the NAD-dependent conversion of D-erythrose 4-phosphate to 4-phosphoerythronate. This chain is D-erythrose-4-phosphate dehydrogenase, found in Pseudoalteromonas atlantica (strain T6c / ATCC BAA-1087).